We begin with the raw amino-acid sequence, 353 residues long: MLLFETVREMGHEQVLFCHSKNPEIKAIIAIHDTTLGPAMGATRILPYINEEAALKDALRLSRGMTYKAACANIPAGGGKAVIIANPENKTDDLLRAYGRFVDSLNGRFITGQDVNITPDDVRTISQETKYVVGVSEKSGGPAPITSLGVFLGIKAAVESRWQSKRLDGMKVAVQGLGNVGKNLCRHLHEHDVQLFVSDVDPIKAEEVKRLFGATVVEPTEIYSLDVDIFAPCALGGILNSHTIPFLQASIIAGAANNQLENEQLHSQMLAKKGILYSPDYVINAGGLINVYNEMIGYDEEKAFKQVHNIYDTLLAIFEIAKEQGVTTNDAARRLAEDRINNSKRSKSKAIAA.

Residue arginine 44 participates in NAD(+) binding. The active-site Proton donor/acceptor is the lysine 80. NAD(+) contacts are provided by residues aspartate 114, threonine 146, 176–181, lysine 204, and 255–257; these read GLGNVG and AAN.

Belongs to the Glu/Leu/Phe/Val dehydrogenases family. In terms of assembly, homodimer.

The enzyme catalyses L-tryptophan + NAD(+) + H2O = indole-3-pyruvate + NH4(+) + NADH + H(+). With respect to regulation, highly susceptible to inhibition by indole-3-pyruvate. Activity is not affected by the presence of metal ions, EDTA, KCl or DMSO. Its function is as follows. Catalyzes the reversible oxidative deamination of L-tryptophan to indole-3-pyruvate in the presence of NAD(+). Shows weak activity with L-phenylalanine, but cannot use other L-amino acids and D-Trp. Cannot use NADP(+) for oxidative deamination of L-Trp, and shows only weak activity with NADPH for reductive amination of indole-3-pyruvate. Involved in the biosynthesis of scytonemin, a cyanobacterial radiation-absorbing pigment. In Nostoc punctiforme, this protein is L-tryptophan dehydrogenase.